Consider the following 207-residue polypeptide: MQIGLDFNLVEDLVAGVDEVGRGPLCGAVVTAAVILDPARPILGLNDSKKLTEARREALFDEICEKALSFCIARAEVEEIDSLNILQATMLAMQRAVEGLHITPKLALIDGNRCPKLAVPAAPVVKGDSQVPAIAAASILAKVTRDREMSAFELIYPGYGIGGHKGYPTPVHLEALARLGPTPIHRRSFAPVRAAWEAREGVTDSLI.

Residues 12-201 enclose the RNase H type-2 domain; that stretch reads DLVAGVDEVG…VRAAWEAREG (190 aa). A divalent metal cation is bound by residues D18, E19, and D110.

The protein belongs to the RNase HII family. Requires Mn(2+) as cofactor. Mg(2+) is required as a cofactor.

Its subcellular location is the cytoplasm. The enzyme catalyses Endonucleolytic cleavage to 5'-phosphomonoester.. Endonuclease that specifically degrades the RNA of RNA-DNA hybrids. The polypeptide is Ribonuclease HII (Pseudomonas putida (strain ATCC 47054 / DSM 6125 / CFBP 8728 / NCIMB 11950 / KT2440)).